A 305-amino-acid polypeptide reads, in one-letter code: Tetraspanin-12 (305 aa).

Topologically, residues methionine 1–cysteine 12 are cytoplasmic. Residues cysteine 9 and cysteine 12 are each lipidated (S-palmitoyl cysteine). A helical transmembrane segment spans residues leucine 13–alanine 33. The Extracellular portion of the chain corresponds to tryptophan 34–tyrosine 59. The helical transmembrane segment at phenylalanine 60–leucine 80 threads the bilayer. Cysteine 83 carries the S-palmitoyl cysteine lipid modification. A helical transmembrane segment spans residues leucine 90–cysteine 110. The Extracellular portion of the chain corresponds to glycine 111–arginine 224. The chain crosses the membrane as a helical span at residues phenylalanine 225–leucine 245. The Cytoplasmic portion of the chain corresponds to tryptophan 246–leucine 305.

It belongs to the tetraspanin (TM4SF) family. In terms of assembly, component of a complex, at least composed of TSPAN12, FZD4 and norrin (NDP). Interacts (when palmitoylated) with ADAM10. Interacts with MMP14/MT1-MMP. Post-translationally, palmitoylated; required for interaction with ADAM10. The precise position of palmitoylated residues is unclear and occurs either on Cys-9, Cys-12 and/or Cys-83.

It is found in the cell membrane. Regulator of cell surface receptor signal transduction. Plays a central role in retinal vascularization by regulating norrin (NDP) signal transduction. Acts in concert with norrin (NDP) to promote FZD4 multimerization and subsequent activation of FZD4, leading to promote accumulation of beta-catenin (CTNNB1) and stimulate LEF/TCF-mediated transcriptional programs. Suprisingly, it only activates the norrin (NDP)-dependent activation of FZD4, while it does not activate the Wnt-dependent activation of FZD4, suggesting the existence of a Wnt-independent signaling that also promote accumulation the beta-catenin (CTNNB1). Acts as a regulator of membrane proteinases such as ADAM10 and MMP14/MT1-MMP. Activates ADAM10-dependent cleavage activity of amyloid precursor protein (APP). Activates MMP14/MT1-MMP-dependent cleavage activity. The sequence is that of Tetraspanin-12 (Tspan12) from Rattus norvegicus (Rat).